Consider the following 250-residue polypeptide: Small ribosomal subunit protein uS3 (250 aa).

A KH type-2 domain is found at 39 to 111 (IRQLINNFSK…DINLNILEVK (73 aa)).

The protein belongs to the universal ribosomal protein uS3 family. As to quaternary structure, part of the 30S ribosomal subunit. Forms a tight complex with proteins S10 and S14.

Binds the lower part of the 30S subunit head. Binds mRNA in the 70S ribosome, positioning it for translation. The polypeptide is Small ribosomal subunit protein uS3 (Phytoplasma australiense).